An 86-amino-acid chain; its full sequence is Weak toxin 1 (86 aa).

An N-terminal signal peptide occupies residues 1 to 23 (MKTLLLTLVVVAIVCLDLGYTLT). 5 disulfide bridges follow: C24/C45, C27/C32, C38/C63, C67/C78, and C79/C84.

This sequence belongs to the three-finger toxin family. Ancestral subfamily. Orphan group II sub-subfamily. Expressed by the venom gland.

It localises to the secreted. In terms of biological role, binds with low affinity to muscular (alpha-1-beta-1-delta-epsilon/CHRNA1-CHRNB1-CHRND-CHRNE) and very low affinity to neuronal (alpha-7/CHRNA7) nicotinic acetylcholine receptor (nAChR). This is Weak toxin 1 from Bungarus candidus (Malayan krait).